We begin with the raw amino-acid sequence, 713 residues long: Undecaprenyl-diphosphooligosaccharide--protein glycotransferase (713 aa).

The Cytoplasmic segment spans residues 1–11; that stretch reads MLKKEYLKNPY. The chain crosses the membrane as a helical span at residues 12-35; it reads LVLFAMIVLAYVFSVFCRFYWVWW. Topologically, residues 36 to 96 are periplasmic; it reads ASEFNEYFFN…YWLYKITPFS (61 aa). Positions 52-54 match the DXD motif 1 motif; that stretch reads SND. Aspartate 54 contributes to the Mn(2+) binding site. A helical transmembrane segment spans residues 97-122; sequence FESIILYMSTFLSSLVVIPIILLANE. Over 123–125 the chain is Cytoplasmic; that stretch reads YKR. The chain crosses the membrane as a helical span at residues 126–144; sequence PLMGFVAALLASVANSYYN. Residues 145–152 are Periplasmic-facing; the sequence is RTMSGYYD. Aspartate 152 is a binding site for Mn(2+). The short motif at 152-154 is the DXD motif 2 element; sequence DTD. A helical transmembrane segment spans residues 153–174; sequence TDMLVIVLPMFILFFMVRMILK. Residues 175–176 lie on the Cytoplasmic side of the membrane; that stretch reads KD. Residues 177-192 form a helical membrane-spanning segment; sequence FFSLIALPLFIGIYLW. Residues 193 to 197 are Periplasmic-facing; sequence WYPSS. 194 to 196 contacts [alpha-D-GalNAc-(1-&gt;4)]2-[beta-D-Glc-(1-&gt;3)]-[alpha-D-GalNAc-(1-&gt;4)]2-alpha-D-GalNAc-(1-&gt;3)-alpha-D-diNAcBac-tri-trans,hepta-cis-undecaprenyl diphosphate; that stretch reads YPS. A helical membrane pass occupies residues 198 to 215; it reads YTLNVALIGLFLIYTLIF. Residues 216 to 220 are Cytoplasmic-facing; that stretch reads HRKEK. Residues 221–233 form a helical membrane-spanning segment; it reads IFYIAVILSSLTL. The Periplasmic segment spans residues 234–237; that stretch reads SNIA. The chain crosses the membrane as a helical span at residues 238–254; it reads WFYQSAIIVILFALFAL. Topologically, residues 255–260 are cytoplasmic; it reads EQKRLN. A helical transmembrane segment spans residues 261 to 278; it reads FMIIGILGSATLIFLILS. The Periplasmic segment spans residues 279-324; the sequence is GGVDPILYQLKFYIFRSDESANLTQGFMYFNVNQTIQEVENVDFSE. A [alpha-D-GalNAc-(1-&gt;4)]2-[beta-D-Glc-(1-&gt;3)]-[alpha-D-GalNAc-(1-&gt;4)]2-alpha-D-GalNAc-(1-&gt;3)-alpha-D-diNAcBac-tri-trans,hepta-cis-undecaprenyl diphosphate-binding site is contributed by tyrosine 291. Positions 313-316 match the TIXE motif motif; that stretch reads TIQE. Position 316 (glutamate 316) interacts with Mn(2+). A helical transmembrane segment spans residues 325–347; it reads FMRRISGSEIVFLFSLFGFVWLL. Residues 348-352 lie on the Cytoplasmic side of the membrane; sequence RKHKS. Residues 353–369 form a helical membrane-spanning segment; sequence MIMALPILVLGFLALKG. Residues 370 to 373 lie on the Periplasmic side of the membrane; sequence GLRF. Arginine 372 contributes to the [alpha-D-GalNAc-(1-&gt;4)]2-[beta-D-Glc-(1-&gt;3)]-[alpha-D-GalNAc-(1-&gt;4)]2-alpha-D-GalNAc-(1-&gt;3)-alpha-D-diNAcBac-tri-trans,hepta-cis-undecaprenyl diphosphate binding site. The helical transmembrane segment at 374 to 396 threads the bilayer; it reads TIYSVPVMALGFGFLLSEFKAIL. The Cytoplasmic portion of the chain corresponds to 397–406; sequence VKKYSQLTSN. A helical membrane pass occupies residues 407 to 427; the sequence is VCIVFATILTLAPVFIHIYNY. Residues 428 to 713 lie on the Periplasmic side of the membrane; the sequence is KAPTVFSQNE…RDAKVFKLKI (286 aa). The tract at residues 457 to 459 is interacts with target acceptor peptide in protein substrate; sequence WWD. The short motif at 457-461 is the WWDYG motif element; it reads WWDYG. Tyrosine 462 lines the [alpha-D-GalNAc-(1-&gt;4)]2-[beta-D-Glc-(1-&gt;3)]-[alpha-D-GalNAc-(1-&gt;4)]2-alpha-D-GalNAc-(1-&gt;3)-alpha-D-diNAcBac-tri-trans,hepta-cis-undecaprenyl diphosphate pocket. Asparagine 534 is a glycosylation site (N-linked (DATDGlc) asparagine). An MI motif motif is present at residues 568–575; sequence MSLIFSTV.

This sequence belongs to the STT3 family. It depends on Mg(2+) as a cofactor. The cofactor is Mn(2+).

The protein resides in the cell inner membrane. It carries out the reaction tritrans,heptacis-undecaprenyl diphosphooligosaccharide + [protein]-L-asparagine = tritrans,heptacis-undecaprenyl diphosphate + a glycoprotein with the oligosaccharide chain attached by N-beta-D-glycosyl linkage to protein L-asparagine.. Its pathway is protein modification; protein glycosylation. Oligosaccharyl transferase (OST) that catalyzes the initial transfer of a defined glycan (GalNAc(2)GlcGalNAc(3)Bac(NAc)(2) in eubacteria, where Bac(NAc)(2) is di-N-acetyl bacillosamine) from the lipid carrier undecaprenol-pyrophosphate to an asparagine residue within an Asp/Glu-Asn-X-Ser/Thr consensus motif in nascent polypeptide chains, the first step in protein N-glycosylation. This chain is Undecaprenyl-diphosphooligosaccharide--protein glycotransferase (pglB), found in Campylobacter jejuni subsp. jejuni serotype O:2 (strain ATCC 700819 / NCTC 11168).